The chain runs to 520 residues: Cytochrome P450 monooxygenase TRI4 (520 aa).

Residues 10–30 (LVNIPISHAVGVVAASTVIYF) form a helical membrane-spanning segment. An N-linked (GlcNAc...) asparagine glycan is attached at Asn447. Cys455 is a binding site for heme.

This sequence belongs to the cytochrome P450 family. The cofactor is heme.

The protein resides in the membrane. It participates in sesquiterpene biosynthesis; trichothecene biosynthesis. Cytochrome P450 monooxygenase; part of the core gene cluster that mediates the biosynthesis of trichothecenes, a very large family of chemically related bicyclic sesquiterpene compounds acting as mycotoxins, including T2-toxin. The biosynthesis of trichothecenes begins with the cyclization of farnesyl diphosphate to trichodiene and is catalyzed by the trichodiene synthase TRI5. Trichodiene undergoes a series of oxygenations catalyzed by the cytochrome P450 monooxygenase TRI4. TRI4 controls the addition of four oxygens at C-2, C-3, C-11, and the C-12, C-13-epoxide to form the intermediate isotrichotriol. Isotrichotriol then undergoes a non-enzymatic isomerization and cyclization to form isotrichodermol. During this process, the oxygen at the C-2 position becomes the pyran ring oxygen and the hydroxyl group at C-11 is lost. More complex type A trichothecenes are built by modifying isotrichodermol through a series of paired hydroxylation and acetylation or acylation steps. Isotrichodermol is converted to isotrichodermin by the acetyltransferase TRI101. TRI101 encodes a C-3 transacetylase that acts as a self-protection or resistance factor during biosynthesis and that the presence of a free C-3 hydroxyl group is a key component of Fusarium trichothecene phytotoxicity. A second hydroxyl group is added to C-15 by the trichothecene C-15 hydroxylase TRI11, producing 15-decalonectrin, which is then acetylated by TRI3, producing calonectrin. A third hydroxyl group is added at C-4 by the cytochrome P450 monooxygenase TRI13, converting calonectrin to 3,15-diacetoxyspirpenol, which is subsequently acetylated by the acetyltransferase TRI7. A fourth hydroxyl group is added to C-8 by the cytochrome P450 monooxygenase TRI1, followed by the addition of an isovaleryl moiety by TRI16. Finally, the acetyl group is removed from the C-3 position by the trichothecene C-3 esterase TRI8 to produce T-2 toxin. The polypeptide is Cytochrome P450 monooxygenase TRI4 (Fusarium sporotrichioides).